Consider the following 422-residue polypeptide: Gamma-glutamyl phosphate reductase (422 aa).

Belongs to the gamma-glutamyl phosphate reductase family.

The protein resides in the cytoplasm. It carries out the reaction L-glutamate 5-semialdehyde + phosphate + NADP(+) = L-glutamyl 5-phosphate + NADPH + H(+). Its pathway is amino-acid biosynthesis; L-proline biosynthesis; L-glutamate 5-semialdehyde from L-glutamate: step 2/2. Functionally, catalyzes the NADPH-dependent reduction of L-glutamate 5-phosphate into L-glutamate 5-semialdehyde and phosphate. The product spontaneously undergoes cyclization to form 1-pyrroline-5-carboxylate. This Chloroflexus aggregans (strain MD-66 / DSM 9485) protein is Gamma-glutamyl phosphate reductase.